The sequence spans 101 residues: Small ribosomal subunit protein uS14 (101 aa).

The protein belongs to the universal ribosomal protein uS14 family. As to quaternary structure, part of the 30S ribosomal subunit. Contacts proteins S3 and S10.

Its function is as follows. Binds 16S rRNA, required for the assembly of 30S particles and may also be responsible for determining the conformation of the 16S rRNA at the A site. The chain is Small ribosomal subunit protein uS14 from Dechloromonas aromatica (strain RCB).